A 250-amino-acid chain; its full sequence is Glycerol uptake facilitator protein-like 5 (250 aa).

2 helical membrane passes run 12–32 and 46–66; these read EFFGTLILVLLGNGAVANAFL and GGWLLVASGYGLGVMLPAMMF. An NPA 1 motif is present at residues 75–77; it reads NPA. Helical transmembrane passes span 85–105, 142–162, and 172–192; these read IGIFPWAHVAPYLIWQFLGAI, LNGFVTEMVGTAVLIFGAMGL, and IDIANIGVGLLIAAMVISLGG. The NPA 2 signature appears at 199 to 201; it reads NPA. The helical transmembrane segment at 230–250 threads the bilayer; that stretch reads VVAPIVGAVIGIWIYKIFFGL.

This sequence belongs to the MIP/aquaporin (TC 1.A.8) family.

It is found in the cell membrane. In terms of biological role, probable transporter that facilitates the transmembrane diffusion of an unknown substrate. Is not permeable to water, dihydroxyacetone, glycerol, urea, H(2)O(2) and D/L-lactic acid. In Lactiplantibacillus plantarum (strain ATCC BAA-793 / NCIMB 8826 / WCFS1) (Lactobacillus plantarum), this protein is Glycerol uptake facilitator protein-like 5.